The sequence spans 127 residues: Small ribosomal subunit protein uS17m (127 aa).

Belongs to the universal ribosomal protein uS17 family.

The protein resides in the mitochondrion. This is Small ribosomal subunit protein uS17m (mrps17) from Dictyostelium discoideum (Social amoeba).